A 160-amino-acid polypeptide reads, in one-letter code: MPLYEHVFLARQDASTQQVEELTTQITGVIEGLGGKVTKTEAWGLRSLTYRMNKNRKAHFVMLNIDGPSAVVAEVERQERINEDIIRYLTVRVEEHEEGPSAMMRKADRDRERDDRGGREGGGFRGDREGRGDREGGGFRGDRGPRRPREDADTAAASEE.

Basic and acidic residues-rich tracts occupy residues 94-119 (EEHEEGPSAMMRKADRDRERDDRGGR) and 125-152 (RGDREGRGDREGGGFRGDRGPRRPREDA). The interval 94–160 (EEHEEGPSAM…DADTAAASEE (67 aa)) is disordered.

Belongs to the bacterial ribosomal protein bS6 family.

Functionally, binds together with bS18 to 16S ribosomal RNA. In Rhodopseudomonas palustris (strain BisB5), this protein is Small ribosomal subunit protein bS6.